A 364-amino-acid chain; its full sequence is Fructose-bisphosphate aldolase A (364 aa).

Tyr5 carries the post-translational modification Phosphotyrosine. Phosphothreonine is present on Thr9. A phosphoserine mark is found at Ser36 and Ser39. At Lys42 the chain carries N6-acetyllysine; alternate. Residue Lys42 forms a Glycyl lysine isopeptide (Lys-Gly) (interchain with G-Cter in SUMO1); alternate linkage. Residue Lys42 forms a Glycyl lysine isopeptide (Lys-Gly) (interchain with G-Cter in SUMO2); alternate linkage. Arg43 is a beta-D-fructose 1,6-bisphosphate binding site. Residue Ser46 is modified to Phosphoserine. At Lys99 the chain carries N6-(2-hydroxyisobutyryl)lysine. Lys108 bears the N6-acetyllysine mark. N6-acetyllysine; alternate is present on Lys111. The residue at position 111 (Lys111) is an N6-malonyllysine; alternate. Ser132 is subject to Phosphoserine. Lys147 is modified (N6-(2-hydroxyisobutyryl)lysine). The Proton acceptor role is filled by Glu188. Lys230 functions as the Schiff-base intermediate with dihydroxyacetone-P in the catalytic mechanism. The residue at position 272 (Ser272) is a Phosphoserine. Beta-D-fructose 1,6-bisphosphate is bound by residues 272 to 274 (SGG), Ser301, and Arg304. At Lys312 the chain carries N6-malonyllysine. Lys330 is modified (N6-acetyllysine).

It belongs to the class I fructose-bisphosphate aldolase family. Homotetramer. Interacts with SNX9 and WAS. Interacts with FBP2; the interaction blocks FBP2 inhibition by physiological concentrations of AMP and reduces inhibition by Ca(2+).

It localises to the cytoplasm. The protein resides in the myofibril. The protein localises to the sarcomere. It is found in the i band. Its subcellular location is the m line. It carries out the reaction beta-D-fructose 1,6-bisphosphate = D-glyceraldehyde 3-phosphate + dihydroxyacetone phosphate. The protein operates within carbohydrate degradation; glycolysis; D-glyceraldehyde 3-phosphate and glycerone phosphate from D-glucose: step 4/4. In terms of biological role, catalyzes the reversible conversion of beta-D-fructose 1,6-bisphosphate (FBP) into two triose phosphate and plays a key role in glycolysis and gluconeogenesis. In addition, may also function as scaffolding protein. The sequence is that of Fructose-bisphosphate aldolase A from Homo sapiens (Human).